We begin with the raw amino-acid sequence, 340 residues long: Phosphoribosylformylglycinamidine cyclo-ligase (340 aa).

This sequence belongs to the AIR synthase family.

The protein resides in the cytoplasm. The catalysed reaction is 2-formamido-N(1)-(5-O-phospho-beta-D-ribosyl)acetamidine + ATP = 5-amino-1-(5-phospho-beta-D-ribosyl)imidazole + ADP + phosphate + H(+). The protein operates within purine metabolism; IMP biosynthesis via de novo pathway; 5-amino-1-(5-phospho-D-ribosyl)imidazole from N(2)-formyl-N(1)-(5-phospho-D-ribosyl)glycinamide: step 2/2. The polypeptide is Phosphoribosylformylglycinamidine cyclo-ligase (Streptococcus pneumoniae (strain P1031)).